The following is an 83-amino-acid chain: MPKTPANVKPMDVLKSALSRNVLIDVKGNREYSGILEGYDVYMNIVLQNASEIINGENKGVYDRVLVRGDNVIFVSPSKGDGS.

The Sm domain maps to 9-81; the sequence is KPMDVLKSAL…VIFVSPSKGD (73 aa).

Belongs to the snRNP Sm proteins family.

The sequence is that of Putative snRNP Sm-like protein from Thermoplasma acidophilum (strain ATCC 25905 / DSM 1728 / JCM 9062 / NBRC 15155 / AMRC-C165).